Reading from the N-terminus, the 206-residue chain is Large ribosomal subunit protein uL4 (206 aa).

The disordered stretch occupies residues 46 to 89; that stretch reads GNRAQKTRAEVKHSTKKPWRQKGTGRARSGMTSSPLWRKGGRAF. The segment covering 59-70 has biased composition (basic residues); the sequence is STKKPWRQKGTG.

This sequence belongs to the universal ribosomal protein uL4 family. Part of the 50S ribosomal subunit.

Its function is as follows. One of the primary rRNA binding proteins, this protein initially binds near the 5'-end of the 23S rRNA. It is important during the early stages of 50S assembly. It makes multiple contacts with different domains of the 23S rRNA in the assembled 50S subunit and ribosome. Functionally, forms part of the polypeptide exit tunnel. The polypeptide is Large ribosomal subunit protein uL4 (Neisseria gonorrhoeae (strain NCCP11945)).